We begin with the raw amino-acid sequence, 630 residues long: tRNA uridine 5-carboxymethylaminomethyl modification enzyme MnmG (630 aa).

13-18 (GGGHAG) contacts FAD. 273–287 (GPRYCPSIEDKIHRF) contacts NAD(+).

Belongs to the MnmG family. In terms of assembly, homodimer. Heterotetramer of two MnmE and two MnmG subunits. The cofactor is FAD.

It localises to the cytoplasm. NAD-binding protein involved in the addition of a carboxymethylaminomethyl (cmnm) group at the wobble position (U34) of certain tRNAs, forming tRNA-cmnm(5)s(2)U34. The sequence is that of tRNA uridine 5-carboxymethylaminomethyl modification enzyme MnmG from Pseudomonas aeruginosa (strain LESB58).